The following is a 538-amino-acid chain: RNA-binding protein Ro60 (538 aa).

An N-acetylmethionine modification is found at Met1. A phosphoserine mark is found at Ser4 and Ser19. The TROVE domain maps to 16-369 (VVNSEGGCVW…TFKTVEPTGK (354 aa)). Residues 120 to 284 (RIPTHLFTFI…EMPLTALLRN (165 aa)) form an RNA-binding region. The residue at position 224 (Lys224) is an N6-acetyllysine. The tract at residues 361–538 (FKTVEPTGKR…VIRNFTLDVI (178 aa)) is VWFA-like domain. The a divalent metal cation site is built by Ser378, Ser380, and Thr445.

The protein belongs to the Ro 60 kDa family. Identified in a IGF2BP1-dependent mRNP granule complex containing untranslated mRNAs. Found in a complex with PUF60 and Y5 RNA. Interacts with RAB11FIP5. In terms of tissue distribution, highest in brain, followed by lung, muscle, kidney and heart. Lower levels are found in testis, liver and spleen.

It is found in the cytoplasm. Its function is as follows. RNA-binding protein that binds to misfolded non-coding RNAs, pre-5S rRNA, and several small cytoplasmic RNA molecules known as Y RNAs. May play roles in cilia formation and/or maintenance. The protein is RNA-binding protein Ro60 of Mus musculus (Mouse).